The sequence spans 102 residues: Citrate lyase acyl carrier protein (102 aa).

Ser14 is modified (O-(phosphoribosyl dephospho-coenzyme A)serine).

The protein belongs to the CitD family. Oligomer with a subunit composition of (alpha,beta,gamma)6.

Its subcellular location is the cytoplasm. In terms of biological role, covalent carrier of the coenzyme of citrate lyase. In Streptococcus pyogenes serotype M4 (strain MGAS10750), this protein is Citrate lyase acyl carrier protein.